We begin with the raw amino-acid sequence, 255 residues long: Kallikrein-15 (255 aa).

A signal peptide spans 1–15; sequence MWLLLPLSFLLTSTA. A propeptide spans 16–20 (activation peptide); it reads QDGGK. The segment at 21-253 is serine protease; sequence LLEGEECAPH…YVKWIRETMK (233 aa). The cysteines at positions 46 and 62 are disulfide-linked. Catalysis depends on charge relay system residues histidine 61 and aspartate 105. Cystine bridges form between cysteine 137-cysteine 214, cysteine 179-cysteine 193, and cysteine 204-cysteine 229. Asparagine 170 is a glycosylation site (N-linked (GlcNAc...) asparagine). The active-site Charge relay system is the serine 208. An N-linked (GlcNAc...) asparagine glycan is attached at asparagine 231.

The protein belongs to the peptidase S1 family. Kallikrein subfamily.

It is found in the secreted. Protease whose physiological substrate is not yet known. This Saguinus oedipus (Cotton-top tamarin) protein is Kallikrein-15 (KLK15).